A 432-amino-acid chain; its full sequence is Cytochrome c biogenesis protein CcsB (432 aa).

3 consecutive transmembrane segments (helical) span residues 14 to 34 (LRIA…GTAI), 72 to 92 (SSWF…CSWR), and 162 to 182 (VGPM…VWGS).

This sequence belongs to the Ccs1/CcsB family. In terms of assembly, may interact with CcsA.

Its subcellular location is the cellular thylakoid membrane. In terms of biological role, required during biogenesis of c-type cytochromes (cytochrome c6 and cytochrome f) at the step of heme attachment. In Prochlorococcus marinus (strain MIT 9303), this protein is Cytochrome c biogenesis protein CcsB.